Reading from the N-terminus, the 215-residue chain is 3,4-dihydroxy-2-butanone 4-phosphate synthase (215 aa).

D-ribulose 5-phosphate is bound by residues 38–39, Asp-43, 151–155, and Glu-175; these read RE and RRGHT. Residue Glu-39 coordinates Mg(2+). Residue His-154 coordinates Mg(2+).

The protein belongs to the DHBP synthase family. Homodimer. Mg(2+) is required as a cofactor. Mn(2+) serves as cofactor.

The enzyme catalyses D-ribulose 5-phosphate = (2S)-2-hydroxy-3-oxobutyl phosphate + formate + H(+). It functions in the pathway cofactor biosynthesis; riboflavin biosynthesis; 2-hydroxy-3-oxobutyl phosphate from D-ribulose 5-phosphate: step 1/1. Its function is as follows. Catalyzes the conversion of D-ribulose 5-phosphate to formate and 3,4-dihydroxy-2-butanone 4-phosphate. The sequence is that of 3,4-dihydroxy-2-butanone 4-phosphate synthase from Haemophilus influenzae (strain ATCC 51907 / DSM 11121 / KW20 / Rd).